The following is a 120-amino-acid chain: Chaperonin GroEL (120 aa).

23–27 (DGTTT) contributes to the ATP binding site.

Belongs to the chaperonin (HSP60) family. Forms a cylinder of 14 subunits composed of two heptameric rings stacked back-to-back. Interacts with the co-chaperonin GroES.

The protein resides in the cytoplasm. The enzyme catalyses ATP + H2O + a folded polypeptide = ADP + phosphate + an unfolded polypeptide.. Together with its co-chaperonin GroES, plays an essential role in assisting protein folding. The GroEL-GroES system forms a nano-cage that allows encapsulation of the non-native substrate proteins and provides a physical environment optimized to promote and accelerate protein folding. This Mycobacterium malmoense protein is Chaperonin GroEL.